Consider the following 95-residue polypeptide: Large ribosomal subunit protein bL27 (95 aa).

A propeptide spanning residues 1 to 10 (MLLTMNLQLF) is cleaved from the precursor. Residues 12-38 (HKKGGGSTSNGRDSESKRLGAKSADGQ) form a disordered region.

This sequence belongs to the bacterial ribosomal protein bL27 family. The N-terminus is cleaved by ribosomal processing cysteine protease Prp.

This Enterococcus faecalis (strain ATCC 700802 / V583) protein is Large ribosomal subunit protein bL27.